The primary structure comprises 208 residues: Ribosomal RNA large subunit methyltransferase E (208 aa).

5 residues coordinate S-adenosyl-L-methionine: Gly62, Trp64, Asp82, Asp98, and Asp123. The Proton acceptor role is filled by Lys163.

The protein belongs to the class I-like SAM-binding methyltransferase superfamily. RNA methyltransferase RlmE family.

It is found in the cytoplasm. It catalyses the reaction uridine(2552) in 23S rRNA + S-adenosyl-L-methionine = 2'-O-methyluridine(2552) in 23S rRNA + S-adenosyl-L-homocysteine + H(+). Specifically methylates the uridine in position 2552 of 23S rRNA at the 2'-O position of the ribose in the fully assembled 50S ribosomal subunit. The polypeptide is Ribosomal RNA large subunit methyltransferase E (Idiomarina loihiensis (strain ATCC BAA-735 / DSM 15497 / L2-TR)).